A 406-amino-acid polypeptide reads, in one-letter code: Enoyl-[acyl-carrier-protein] reductase [NADH] (406 aa).

NAD(+)-binding positions include 48-53, 74-75, 111-112, and 140-141; these read GASTGF, FE, DA, and IA. Y226 is a substrate binding site. Y236 functions as the Proton donor in the catalytic mechanism. NAD(+) contacts are provided by residues K245 and 275-277; that span reads LVT.

Belongs to the TER reductase family. As to quaternary structure, monomer.

It carries out the reaction a 2,3-saturated acyl-[ACP] + NAD(+) = a (2E)-enoyl-[ACP] + NADH + H(+). The protein operates within lipid metabolism; fatty acid biosynthesis. Its function is as follows. Involved in the final reduction of the elongation cycle of fatty acid synthesis (FAS II). Catalyzes the reduction of a carbon-carbon double bond in an enoyl moiety that is covalently linked to an acyl carrier protein (ACP). This is Enoyl-[acyl-carrier-protein] reductase [NADH] from Coxiella burnetii (strain CbuK_Q154) (Coxiella burnetii (strain Q154)).